Reading from the N-terminus, the 183-residue chain is MTKQPDDWLDEVPDNENDDDDDEIIWVSKSEIKRDAEELKRLGAELVDLGKNALDKIPLDDDLRAAIELAQRIKKEGRRRQMQLIGKMLRQRDDEPIRQALDKLKNRHNQQVALFHKLEQLRDRLIEEGDDAVPDVLNLWPQADRQQLRSLIRNAKKEKEGNKPPKSSRLIFQYLRELAESEQ.

A disordered region spans residues 1-23; that stretch reads MTKQPDDWLDEVPDNENDDDDDE. Residues 7–23 are compositionally biased toward acidic residues; it reads DWLDEVPDNENDDDDDE.

It belongs to the DarP family.

It localises to the cytoplasm. Member of a network of 50S ribosomal subunit biogenesis factors which assembles along the 30S-50S interface, preventing incorrect 23S rRNA structures from forming. Promotes peptidyl transferase center (PTC) maturation. In Cronobacter sakazakii (strain ATCC BAA-894) (Enterobacter sakazakii), this protein is Dual-action ribosomal maturation protein DarP.